The chain runs to 410 residues: Phospho-N-acetylmuramoyl-pentapeptide-transferase (410 aa).

The next 10 membrane-spanning stretches (helical) occupy residues 23 to 43, 73 to 93, 96 to 116, 132 to 152, 215 to 235, 248 to 268, 285 to 305, 307 to 327, 332 to 352, and 387 to 407; these read YITF…TIYG, TPTM…FLFA, HNIY…IGFV, GIFK…VLYF, WAWL…SNGA, TSAV…NIIF, VFIS…SFPA, VFMG…LAIA, ILIV…IIQV, and KIVT…IVTL.

It belongs to the glycosyltransferase 4 family. MraY subfamily. Mg(2+) is required as a cofactor.

It is found in the cell inner membrane. It catalyses the reaction UDP-N-acetyl-alpha-D-muramoyl-L-alanyl-gamma-D-glutamyl-meso-2,6-diaminopimeloyl-D-alanyl-D-alanine + di-trans,octa-cis-undecaprenyl phosphate = di-trans,octa-cis-undecaprenyl diphospho-N-acetyl-alpha-D-muramoyl-L-alanyl-D-glutamyl-meso-2,6-diaminopimeloyl-D-alanyl-D-alanine + UMP. The protein operates within cell wall biogenesis; peptidoglycan biosynthesis. Functionally, catalyzes the initial step of the lipid cycle reactions in the biosynthesis of the cell wall peptidoglycan: transfers peptidoglycan precursor phospho-MurNAc-pentapeptide from UDP-MurNAc-pentapeptide onto the lipid carrier undecaprenyl phosphate, yielding undecaprenyl-pyrophosphoryl-MurNAc-pentapeptide, known as lipid I. This chain is Phospho-N-acetylmuramoyl-pentapeptide-transferase, found in Flavobacterium johnsoniae (strain ATCC 17061 / DSM 2064 / JCM 8514 / BCRC 14874 / CCUG 350202 / NBRC 14942 / NCIMB 11054 / UW101) (Cytophaga johnsonae).